Consider the following 99-residue polypeptide: Large ribosomal subunit protein eL30 (99 aa).

Belongs to the eukaryotic ribosomal protein eL30 family.

The chain is Large ribosomal subunit protein eL30 from Methanosarcina acetivorans (strain ATCC 35395 / DSM 2834 / JCM 12185 / C2A).